Here is a 201-residue protein sequence, read N- to C-terminus: Adenylyl-sulfate kinase (201 aa).

35–42 contacts ATP; sequence GLSGSGKS. The active-site Phosphoserine intermediate is the Ser-109.

It belongs to the APS kinase family.

The enzyme catalyses adenosine 5'-phosphosulfate + ATP = 3'-phosphoadenylyl sulfate + ADP + H(+). Its pathway is sulfur metabolism; hydrogen sulfide biosynthesis; sulfite from sulfate: step 2/3. Catalyzes the synthesis of activated sulfate. In Salmonella paratyphi C (strain RKS4594), this protein is Adenylyl-sulfate kinase.